Here is a 423-residue protein sequence, read N- to C-terminus: Putative transmembrane protein ORF103 (423 aa).

The segment covering 43 to 57 (EPKIEQEEPQQKPEV) has biased composition (basic and acidic residues). The tract at residues 43-91 (EPKIEQEEPQQKPEVVDVYSNETDKNEEEVSIITSEDEEEDEKGMLFKR) is disordered. A compositionally biased stretch (acidic residues) spans 67-84 (KNEEEVSIITSEDEEEDE). Helical transmembrane passes span 125–145 (IIGI…VAVL) and 162–182 (FSLC…GLAI). A disordered region spans residues 253–282 (DESGSEVSSEDEESDQETLLRNRKMPTNSK). A run of 2 helical transmembrane segments spans residues 326-346 (LISA…IVGS) and 366-386 (IPTL…MCVL).

The protein resides in the host membrane. The chain is Putative transmembrane protein ORF103 from Magallana gigas (Pacific oyster).